Reading from the N-terminus, the 180-residue chain is ATP synthase subunit b 2 (180 aa).

A helical transmembrane segment spans residues 33 to 53; it reads IFWLLVTLVAIYFLLTRVALP.

Belongs to the ATPase B chain family. As to quaternary structure, F-type ATPases have 2 components, F(1) - the catalytic core - and F(0) - the membrane proton channel. F(1) has five subunits: alpha(3), beta(3), gamma(1), delta(1), epsilon(1). F(0) has three main subunits: a(1), b(2) and c(10-14). The alpha and beta chains form an alternating ring which encloses part of the gamma chain. F(1) is attached to F(0) by a central stalk formed by the gamma and epsilon chains, while a peripheral stalk is formed by the delta and b chains.

Its subcellular location is the cell inner membrane. In terms of biological role, f(1)F(0) ATP synthase produces ATP from ADP in the presence of a proton or sodium gradient. F-type ATPases consist of two structural domains, F(1) containing the extramembraneous catalytic core and F(0) containing the membrane proton channel, linked together by a central stalk and a peripheral stalk. During catalysis, ATP synthesis in the catalytic domain of F(1) is coupled via a rotary mechanism of the central stalk subunits to proton translocation. Its function is as follows. Component of the F(0) channel, it forms part of the peripheral stalk, linking F(1) to F(0). The b'-subunit is a diverged and duplicated form of b found in plants and photosynthetic bacteria. The protein is ATP synthase subunit b 2 (atpF2) of Cereibacter sphaeroides (strain ATCC 17029 / ATH 2.4.9) (Rhodobacter sphaeroides).